The chain runs to 336 residues: Biotin synthase (336 aa).

In terms of domain architecture, Radical SAM core spans 57 to 286 (HHGKSIDLCS…RAIVRTAGGR (230 aa)). [4Fe-4S] cluster contacts are provided by cysteine 75, cysteine 79, and cysteine 82. [2Fe-2S] cluster-binding residues include serine 119, cysteine 151, cysteine 211, and arginine 281.

It belongs to the radical SAM superfamily. Biotin synthase family. Homodimer. Requires [4Fe-4S] cluster as cofactor. [2Fe-2S] cluster is required as a cofactor.

It carries out the reaction (4R,5S)-dethiobiotin + (sulfur carrier)-SH + 2 reduced [2Fe-2S]-[ferredoxin] + 2 S-adenosyl-L-methionine = (sulfur carrier)-H + biotin + 2 5'-deoxyadenosine + 2 L-methionine + 2 oxidized [2Fe-2S]-[ferredoxin]. It functions in the pathway cofactor biosynthesis; biotin biosynthesis; biotin from 7,8-diaminononanoate: step 2/2. In terms of biological role, catalyzes the conversion of dethiobiotin (DTB) to biotin by the insertion of a sulfur atom into dethiobiotin via a radical-based mechanism. In Desulfotalea psychrophila (strain LSv54 / DSM 12343), this protein is Biotin synthase.